Here is a 136-residue protein sequence, read N- to C-terminus: Secreted RxLR effector protein 15 (136 aa).

Residues 1–22 (MRGHSALMMAVVTLAAVSSGAA) form the signal peptide. The RxLR motif lies at 47–50 (RLLR).

The protein belongs to the RxLR effector family.

It is found in the secreted. Its subcellular location is the host nucleus. The protein resides in the host cytoplasm. Its function is as follows. Effector that completely suppresses the host cell death induced by cell death-inducing proteins. The sequence is that of Secreted RxLR effector protein 15 from Plasmopara viticola (Downy mildew of grapevine).